A 47-amino-acid polypeptide reads, in one-letter code: Delta-actitoxin-Aspp1a (47 aa).

3 disulfides stabilise this stretch: Cys-4-Cys-44, Cys-6-Cys-34, and Cys-27-Cys-45.

It belongs to the sea anemone sodium channel inhibitory toxin family. Type I subfamily.

Its subcellular location is the secreted. The protein resides in the nematocyst. Binds specifically to voltage-gated sodium channels (Nav) (site 3), thereby delaying their inactivation during signal transduction. Has a heart stimulation effect on isolated rat atria that is higher than that of Hk7a, Hk8a and Hk16a. This is Delta-actitoxin-Aspp1a from Anthopleura sp. (strain 'Zhanjiang') (Sea anemone).